A 540-amino-acid polypeptide reads, in one-letter code: Lysosomal cobalamin transport escort protein LMBD1 (540 aa).

The Extracellular segment spans residues M1–E10. A helical transmembrane segment spans residues L11–I31. Residues Y32–A50 are Cytoplasmic-facing. The chain crosses the membrane as a helical span at residues I51–V71. Topologically, residues S72–G100 are extracellular. N-linked (GlcNAc...) asparagine glycosylation is found at N78 and N88. Residues Y101–F121 traverse the membrane as a helical segment. The Cytoplasmic portion of the chain corresponds to Y122–T144. Residues L145–V165 form a helical membrane-spanning segment. Topologically, residues P166–H188 are extracellular. N-linked (GlcNAc...) asparagine glycosylation is present at N170. A helical membrane pass occupies residues G189–I209. Residues T210 to K305 lie on the Cytoplasmic side of the membrane. Positions Y232–L235 match the YERL motif; mediates interaction with adapter protein complex 2 and is essential for its function in clathrin-mediated endocytosis of INSR motif. T238 is modified (phosphothreonine). Residues W294–F297 carry the WTKF motif; mediates interaction with adapter protein complex 2 and is essential for its function in clathrin-mediated endocytosis of INSR motif. The chain crosses the membrane as a helical span at residues I306 to S326. Topologically, residues N327–P364 are extracellular. N347 carries an N-linked (GlcNAc...) asparagine glycan. A helical membrane pass occupies residues L365–I385. Over R386–Q408 the chain is Cytoplasmic. A helical membrane pass occupies residues A409–Y429. Over S430–K486 the chain is Extracellular. Residues N448 and N457 are each glycosylated (N-linked (GlcNAc...) asparagine). The chain crosses the membrane as a helical span at residues F487–I507. The Cytoplasmic portion of the chain corresponds to G508 to V540. A phosphoserine mark is found at S528 and S531.

This sequence belongs to the LIMR family. LMBRD1 subfamily. Interacts with ABCD4; this interaction induces the translocation of ABCD4 from the endoplasmic reticulum to the lysosome. Interacts with ABCD4 and MMACHC; this interaction ensures the transport of cobalamin from the lysosome to the cytoplasm. Interacts with INSR, adapter protein complex 2 and clathrin heavy chain. In terms of processing, N-glycosylated.

The protein localises to the lysosome membrane. The protein resides in the cell membrane. It localises to the cytoplasmic vesicle. Its subcellular location is the clathrin-coated vesicle. Functionally, lysosomal membrane chaperone required to export cobalamin (vitamin B12) from lysosome to the cytosol, allowing its conversion to cofactors. Targets ABCD4 transporter from the endoplasmic reticulum to the lysosomal membrane. Then forms a complex with lysosomal transporter ABCD4 and cytoplasmic MMACHC to transport cobalamin across the lysosomal membrane. Acts as an adapter protein which plays an important role in mediating and regulating the internalization of the insulin receptor (INSR). Involved in clathrin-mediated endocytosis of INSR via its interaction with adapter protein complex 2. Essential for the initiation of gastrulation and early formation of mesoderm structures during embryogenesis. The protein is Lysosomal cobalamin transport escort protein LMBD1 (LMBRD1) of Macaca fascicularis (Crab-eating macaque).